The sequence spans 166 residues: Protein-export protein SecB (166 aa).

The protein belongs to the SecB family. As to quaternary structure, homotetramer, a dimer of dimers. One homotetramer interacts with 1 SecA dimer.

The protein localises to the cytoplasm. One of the proteins required for the normal export of preproteins out of the cell cytoplasm. It is a molecular chaperone that binds to a subset of precursor proteins, maintaining them in a translocation-competent state. It also specifically binds to its receptor SecA. The sequence is that of Protein-export protein SecB from Rhizorhabdus wittichii (strain DSM 6014 / CCUG 31198 / JCM 15750 / NBRC 105917 / EY 4224 / RW1) (Sphingomonas wittichii).